The sequence spans 469 residues: GDNF family receptor alpha-1 (469 aa).

The first 27 residues, Met-1 to Gly-27, serve as a signal peptide directing secretion. A run of 3 repeats spans residues Asp-28 to Asn-116, Lys-149 to Arg-237, and Glu-238 to Ile-341. A disulfide bridge connects residues Cys-39 and Cys-45. Residues Asn-62 and Asn-163 are each glycosylated (N-linked (GlcNAc...) asparagine). 10 cysteine pairs are disulfide-bonded: Cys-153-Cys-213, Cys-160-Cys-166, Cys-177-Cys-191, Cys-186-Cys-232, Cys-215-Cys-220, Cys-242-Cys-312, Cys-249-Cys-255, Cys-266-Cys-284, Cys-276-Cys-336, and Cys-314-Cys-324. 2 N-linked (GlcNAc...) asparagine glycosylation sites follow: Asn-346 and Asn-405. The GPI-anchor amidated serine moiety is linked to residue Ser-430. Positions His-431 to Leu-469 are cleaved as a propeptide — removed in mature form.

The protein belongs to the GDNFR family. Interacts with GDNF ligand and RET: forms a 2:2:2 ternary complex composed of GDNF ligand, GFRA1 and RET receptor.

Its subcellular location is the cell membrane. It localises to the golgi apparatus. The protein resides in the trans-Golgi network. It is found in the endosome. The protein localises to the multivesicular body. Coreceptor for GDNF, a neurotrophic factor that enhances survival and morphological differentiation of dopaminergic neurons and increases their high-affinity dopamine uptake. GDNF-binding leads to autophosphorylation and activation of the RET receptor. In Gallus gallus (Chicken), this protein is GDNF family receptor alpha-1 (GFRA1).